Consider the following 808-residue polypeptide: MGSNLPAQPNLRVTIIAADGLYKRDVFRFPDPFAVATVGGEQTHTTSVIKKTLNPYWNEMFDLRVNEDSILAIQIFDQKKFKKKDQGFLGVINVRIGDVIDLQMGGDEMLTRDLKKSNDNLVVHGKLIINLSTNLSTPNTNQANGLHRSNLQSSTSSGLVPQVTAPHASPGPSQLDPTASNPSLNPQRVPSTTRPSSTVAPVNGAAAPGASRTNLSSFEDSQGRLPAGWERREDNLGRTYYVDHNTRTTTWTRPSSNYNEATQRTQREANMQLERRAHQSRMLPEDRTGASSPNLQENQQAQTPPAGGSANAVSMMATGATTAGTGELPPGWEQRTTPEGRPYFVDHNTRTTTWVDPRRQQYIRMYGQNANGNNTTIQQQPVSQLGPLPSGWEMRLTNTARVYFVDHNTKTTTWDDPRLPSSLDQGVPQYKRDFRRKLIYFRSQPALRIMSGQCHVKVRRNNIFEDSYAEIMRQSASDLKKRLMIKFDGEDGLDYGGLSREFFFLLSHEMFNPFYCLFEYSAHDNYTLQINPHSGVNPEHLNYFKFIGRVVGLAIFHRRFLDSFFIGAFYKMMLRKKVSLQDMEGVDEDLHRNLTWTLDNDIEGIIELTFAVDDEKFGERRTIDLKPGGRDIPVTNENKHEYVELVTEWKIVKRVEEQFNAFMSGFNELIPADLVNVFDERELELLIGGIADIDVDDWKKHTDYRGYQEQDEVIQNFWKIVRTWDAEQKSRLLQFTTGTSRIPVNGFKDLQGSDGPRRFTIEKSGDPAALPKSHTCFNRLDLPPYKTHETLEHKLSIAVEETLGFGQE.

In terms of domain architecture, C2 spans 1-112 (MGSNLPAQPN…QMGGDEMLTR (112 aa)). 2 disordered regions span residues 134-231 (NLST…GWER) and 275-346 (RRAH…YFVD). Polar residues-rich tracts occupy residues 142-159 (QANG…SSGL) and 171-198 (GPSQ…PSST). Residues 199 to 210 (VAPVNGAAAPGA) show a composition bias toward low complexity. The segment covering 211–220 (SRTNLSSFED) has biased composition (polar residues). The region spanning 223–256 (GRLPAGWERREDNLGRTYYVDHNTRTTTWTRPSS) is the WW 1 domain. Over residues 275-288 (RRAHQSRMLPEDRT) the composition is skewed to basic and acidic residues. Over residues 289–303 (GASSPNLQENQQAQT) the composition is skewed to polar residues. A compositionally biased stretch (low complexity) spans 317-326 (ATGATTAGTG). WW domains are found at residues 326–359 (GELP…DPRR) and 386–419 (GPLP…DPRL). In terms of domain architecture, HECT spans 475-808 (SASDLKKRLM…VEETLGFGQE (334 aa)). C776 functions as the Glycyl thioester intermediate in the catalytic mechanism.

It belongs to the RSP5/NEDD4 family. As to quaternary structure, interacts with creD.

It is found in the cytoplasm. It catalyses the reaction S-ubiquitinyl-[E2 ubiquitin-conjugating enzyme]-L-cysteine + [acceptor protein]-L-lysine = [E2 ubiquitin-conjugating enzyme]-L-cysteine + N(6)-ubiquitinyl-[acceptor protein]-L-lysine.. Its pathway is protein modification; protein ubiquitination. Its function is as follows. E3 ubiquitin-protein ligase which accepts ubiquitin from an E2 ubiquitin-conjugating enzyme in the form of a thioester and then directly transfers the ubiquitin to targeted substrates. Probably involved in the regulatory network controlling carbon source utilization. The sequence is that of Probable E3 ubiquitin-protein ligase hulA (hulA) from Aspergillus terreus (strain NIH 2624 / FGSC A1156).